The chain runs to 3256 residues: Proliferation marker protein Ki-67 (3256 aa).

An FHA domain is found at Cys27–Ile76. The disordered stretch occupies residues Ser101–Ile199. The segment covering Lys107–Arg122 has biased composition (basic and acidic residues). A phosphoserine mark is found at Ser125, Ser128, and Ser166. Over residues Asn161–Asp173 the composition is skewed to basic and acidic residues. Over residues Ser174–His183 the composition is skewed to polar residues. Lys245 participates in a covalent cross-link: Glycyl lysine isopeptide (Lys-Gly) (interchain with G-Cter in SUMO2). Phosphoserine is present on residues Ser264, Ser296, and Ser308. 2 disordered regions span residues Ala271–Ile426 and Arg513–His542. The segment covering Asp314–Glu324 has biased composition (basic and acidic residues). 2 positions are modified to phosphothreonine: Thr328 and Thr347. A compositionally biased stretch (polar residues) spans Val349–Pro358. A phosphoserine mark is found at Ser352, Ser357, and Ser374. Thr401 bears the Phosphothreonine mark. Ser411 bears the Phosphoserine mark. Over residues Lys414 to Ser425 the composition is skewed to polar residues. The interval Glu495–Lys678 is positively charged patch (CP). A PP1-binding domain is found at Lys502–Lys549. Ser538 carries the post-translational modification Phosphoserine. Residue Thr543 is modified to Phosphothreonine. The disordered stretch occupies residues Ser575–Ser632. Ser579 and Ser584 each carry phosphoserine. Over residues Pro603–Glu612 the composition is skewed to polar residues. Ser648 bears the Phosphoserine mark. Residues Thr674–Ser707 are disordered. The segment covering Val676–Thr694 has biased composition (basic residues). The residue at position 761 (Thr761) is a Phosphothreonine. Positions Ser853–Lys886 are disordered. Ser859 carries the post-translational modification Phosphoserine. The span at Ser866–Arg882 shows a compositional bias: polar residues. Residues Gly1000–Pro2928 form a 16 X 122 AA approximate repeats region. K167R repeat units lie at residues Lys1001–Pro1112, Lys1123–Pro1234, Lys1245–Pro1356, Lys1367–Pro1477, Lys1488–Thr1597, and Lys1609–Pro1720. Thr1017 bears the Phosphothreonine mark. Glycyl lysine isopeptide (Lys-Gly) (interchain with G-Cter in SUMO2) cross-links involve residues Lys1022 and Lys1035. The interval Thr1045–Lys1073 is disordered. The segment covering Thr1052 to Pro1072 has biased composition (basic and acidic residues). Ser1071 carries the post-translational modification Phosphoserine. Thr1091 carries the phosphothreonine modification. Lys1093 is covalently cross-linked (Glycyl lysine isopeptide (Lys-Gly) (interchain with G-Cter in SUMO1); alternate). Lys1093 participates in a covalent cross-link: Glycyl lysine isopeptide (Lys-Gly) (interchain with G-Cter in SUMO2); alternate. At Ser1098 the chain carries Phosphoserine. Residues Phe1109–Leu1151 form a disordered region. Thr1111 bears the Phosphothreonine mark. Ser1131 bears the Phosphoserine mark. Thr1139 is subject to Phosphothreonine. A Phosphoserine modification is found at Ser1142. Thr1167 is modified (phosphothreonine). Ser1169 is modified (phosphoserine). Thr1176 is subject to Phosphothreonine. Glycyl lysine isopeptide (Lys-Gly) (interchain with G-Cter in SUMO2) cross-links involve residues Lys1185 and Lys1188. Thr1193 carries the post-translational modification Phosphothreonine. Ser1207 carries the phosphoserine modification. Thr1233 is subject to Phosphothreonine. The segment at Thr1246–Ala1276 is disordered. Phosphoserine is present on residues Ser1253 and Ser1256. Residues Ser1253–Lys1266 show a composition bias toward polar residues. 4 positions are modified to phosphothreonine: Thr1261, Thr1298, Thr1315, and Thr1327. A disordered region spans residues Thr1323–Val1518. Phosphoserine is present on Ser1329. A Phosphothreonine modification is found at Thr1335. Lys1337 participates in a covalent cross-link: Glycyl lysine isopeptide (Lys-Gly) (interchain with G-Cter in SUMO2). Thr1355 bears the Phosphothreonine mark. Ser1376 carries the phosphoserine modification. Position 1383 is a phosphothreonine (Thr1383). Phosphoserine is present on Ser1386. Composition is skewed to basic and acidic residues over residues Pro1394 to Ala1406 and Thr1418 to Leu1442. Phosphothreonine is present on residues Thr1420 and Thr1437. Ser1496 bears the Phosphoserine mark. Thr1503 is subject to Phosphothreonine. Ser1506 carries the phosphoserine modification. Residue Thr1540 is modified to Phosphothreonine. A Phosphotyrosine modification is found at Tyr1552. A phosphothreonine mark is found at Thr1557 and Thr1569. Residues Ser1571 and Ser1617 each carry the phosphoserine modification. The disordered stretch occupies residues Thr1597–Ala1675. N6-acetyllysine is present on Lys1639. Lys1643 participates in a covalent cross-link: Glycyl lysine isopeptide (Lys-Gly) (interchain with G-Cter in SUMO2). The segment covering Thr1660–Ser1672 has biased composition (basic and acidic residues). 2 positions are modified to phosphoserine: Ser1679 and Ser1689. 5 disordered regions span residues Ser1689–Glu1708, Phe1717–Glu1765, Phe1771–Gly1790, Thr1801–Glu1824, and Phe1839–Val1886. Lys1703 is covalently cross-linked (Glycyl lysine isopeptide (Lys-Gly) (interchain with G-Cter in SUMO2)). A Phosphothreonine modification is found at Thr1719. Ser1721 bears the Phosphoserine mark. Residues His1722–Thr1733 show a composition bias toward basic and acidic residues. K167R repeat units lie at residues Lys1731–Pro1842, Thr1854–Pro1964, Lys1975–Pro2086, Lys2097–Pro2204, and Lys2215–Pro2326. Position 1740 is a phosphoserine (Ser1740). 4 positions are modified to phosphothreonine: Thr1747, Thr1764, Thr1784, and Thr1801. Ser1815 is subject to Phosphoserine. Thr1841 carries the post-translational modification Phosphothreonine. Ser1861 and Ser1864 each carry phosphoserine. Residues Ser1861–Lys1874 are compositionally biased toward polar residues. Residues Thr1869, Thr1897, Thr1906, and Thr1923 each carry the phosphothreonine modification. Phosphoserine is present on Ser1937. Residues Phe1961–Ser2002 are disordered. At Thr1963 the chain carries Phosphothreonine. The span at His1966 to Thr1977 shows a compositional bias: basic and acidic residues. Residue Ser1983 is modified to Phosphoserine. Lys2005 bears the N6-acetyllysine mark. Lys2009 is covalently cross-linked (Glycyl lysine isopeptide (Lys-Gly) (interchain with G-Cter in SUMO1); alternate). A Glycyl lysine isopeptide (Lys-Gly) (interchain with G-Cter in SUMO2); alternate cross-link involves residue Lys2009. Residues Lys2017 to Glu2192 form a disordered region. Thr2028 and Thr2065 each carry phosphothreonine. 2 stretches are compositionally biased toward basic and acidic residues: residues Thr2028–Ala2046 and Arg2061–Ala2070. Lys2067 participates in a covalent cross-link: Glycyl lysine isopeptide (Lys-Gly) (interchain with G-Cter in SUMO1); alternate. A Glycyl lysine isopeptide (Lys-Gly) (interchain with G-Cter in SUMO2); alternate cross-link involves residue Lys2067. Ser2072 is modified (phosphoserine). A Phosphothreonine modification is found at Thr2085. Positions Asp2087–Thr2099 are enriched in basic and acidic residues. At Ser2105 the chain carries Phosphoserine. Thr2113 bears the Phosphothreonine mark. Ser2116 and Ser2135 each carry phosphoserine. The span at His2145–Leu2168 shows a compositional bias: basic and acidic residues. 3 positions are modified to phosphothreonine: Thr2146, Thr2163, and Thr2203. Residues Ile2205 to Ile2400 are disordered. Ser2223 is subject to Phosphoserine. Phosphothreonine occurs at positions 2231 and 2233. Ser2239 carries the phosphoserine modification. Thr2259 is modified (phosphothreonine). Residue Ser2261 is modified to Phosphoserine. 5 positions are modified to phosphothreonine: Thr2268, Thr2285, Thr2325, Thr2328, and Thr2333. 5 K167R repeats span residues Lys2336–Pro2447, Lys2458–Pro2569, Lys2580–Thr2688, Lys2700–Asp2805, and Lys2819–Pro2928. Ser2344 carries the post-translational modification Phosphoserine. Residues Thr2352 and Thr2389 each carry the phosphothreonine modification. A Phosphoserine modification is found at Ser2395. The residue at position 2406 (Thr2406) is a Phosphothreonine. Ser2420 bears the Phosphoserine mark. 2 positions are modified to phosphothreonine: Thr2426 and Thr2446. A disordered region spans residues Gln2445 to Gln2480. The segment covering His2449 to Thr2460 has biased composition (basic and acidic residues). The span at Ser2463–Ser2475 shows a compositional bias: polar residues. Phosphoserine is present on Ser2466. Lys2492 participates in a covalent cross-link: Glycyl lysine isopeptide (Lys-Gly) (interchain with G-Cter in SUMO1). Residues Ala2497 to Ser2521 are disordered. A compositionally biased stretch (polar residues) spans Leu2501 to Glu2514. Ser2505, Ser2528, and Ser2588 each carry phosphoserine. The interval Gly2570 to Ile3256 is disordered. Composition is skewed to basic and acidic residues over residues Arg2609 to Ala2618, Thr2632 to Lys2644, and Glu2660 to Pro2675. Lys2613 is covalently cross-linked (Glycyl lysine isopeptide (Lys-Gly) (interchain with G-Cter in SUMO1); alternate). Lys2613 is covalently cross-linked (Glycyl lysine isopeptide (Lys-Gly) (interchain with G-Cter in SUMO2); alternate). Ser2638 carries the post-translational modification Phosphoserine. Residues Leu2685–Leu2696 are compositionally biased toward polar residues. Position 2708 is a phosphoserine (Ser2708). Residue Lys2734 forms a Glycyl lysine isopeptide (Lys-Gly) (interchain with G-Cter in SUMO1); alternate linkage. Residue Lys2734 forms a Glycyl lysine isopeptide (Lys-Gly) (interchain with G-Cter in SUMO2); alternate linkage. 2 stretches are compositionally biased toward basic and acidic residues: residues Asp2751–Ala2770 and His2810–Thr2821. Phosphoserine occurs at positions 2827, 2828, and 2838. A Glycyl lysine isopeptide (Lys-Gly) (interchain with G-Cter in SUMO1); alternate cross-link involves residue Lys2852. A Glycyl lysine isopeptide (Lys-Gly) (interchain with G-Cter in SUMO2); alternate cross-link involves residue Lys2852. Residues Thr2869–Gly2881 show a composition bias toward basic and acidic residues. Positions Ser2941–Asp2951 are enriched in polar residues. Residue Lys2967 forms a Glycyl lysine isopeptide (Lys-Gly) (interchain with G-Cter in SUMO2) linkage. A compositionally biased stretch (polar residues) spans Lys2982–Leu2991. The residue at position 2986 (Lys2986) is an N6-acetyllysine. A compositionally biased stretch (basic residues) spans Lys3029–Gly3039. An ATP-binding site is contributed by Ala3034–Ser3041. The residue at position 3041 (Ser3041) is a Phosphoserine. Composition is skewed to basic and acidic residues over residues Lys3071 to Gln3080 and Glu3113 to Pro3124. At Ser3128 the chain carries Phosphoserine. Basic and acidic residues predominate over residues Asp3138–Arg3154. The segment covering Ser3207–Thr3223 has biased composition (polar residues). The span at Arg3228–Cys3241 shows a compositional bias: basic and acidic residues.

As to quaternary structure, interacts with KIF15. Interacts (via the FHA domain) with NIFK. Interacts with PPP1CC. Component of a complex at least composed of ZNF335, HCFC1, CCAR2, EMSY, MKI67, RBBP5, ASH2L and WDR5; the complex is formed as a result of interactions between components of a nuclear receptor-mediated transcription complex and a histone methylation complex. Interacts with ZNF335. Post-translationally, hyperphosphorylated by CDK1 in mitosis; hyperphosphorylatiom prevents undergoing liquid-liquid phase separation. Dephosphorylated by PPP1CC at the onset of anaphase. Dephosphorylated by protein phosphatase 2A (PP2A) at the onset of anaphase. Dephosphorylation by protein phosphatase 2A (PP2A) and simultaneous exposure of the positively charged patch (CP) during mitotic exit induce the RNA-dependent formation of a liquid-like condensed phase on the chromosome surface. In terms of processing, ubiquitinated by the APC/C complex after neuronal progenitors exit mitosis during brain development, leading to clearance from constitutive heterochromatin.

It localises to the chromosome. Its subcellular location is the nucleus. The protein localises to the nucleolus. Functionally, protein that associates with the surface of mitotic chromosomes and acts both as a chromosome repellent during early mitosis and chromosome attractant during late mitosis. Required to maintain individual mitotic chromosomes dispersed in the cytoplasm following nuclear envelope disassembly. During early mitosis, relocalizes from nucleoli to the chromosome surface where it forms extended brush structures that cover a substantial fraction of the chromosome surface. The MKI67 brush structure prevents chromosomes from collapsing into a single chromatin mass by forming a steric and electrostatic charge barrier: the protein has a high net electrical charge and acts as a surfactant, dispersing chromosomes and enabling independent chromosome motility. During mitotic anaphase, the MKI67 brush structure collapses and MKI67 switches from a chromosome repellent to a chromosome attractant to promote chromosome clustering and facilitate the exclusion of large cytoplasmic particles from the future nuclear space. Mechanistically, dephosphorylation during mitotic exit and simultaneous exposure of a conserved basic patch induce the RNA-dependent formation of a liquid-like condensed phase on the chromosome surface, promoting coalescence of neighboring chromosome surfaces and clustering of chromosomes. Binds premature ribosomal RNAs during anaphase; promoting liquid-liquid phase separation. Binds DNA, with a preference for supercoiled DNA and AT-rich DNA. Does not contribute to the internal structure of mitotic chromosomes. May play a role in chromatin organization; it is however unclear whether it plays a direct role in chromatin organization or whether it is an indirect consequence of its function in mitotic chromosome. The sequence is that of Proliferation marker protein Ki-67 from Homo sapiens (Human).